The sequence spans 1128 residues: GTPase-activating protein BEM3 (1128 aa).

Positions 194–241 (SSPTKIHSEQLASPAASVTYTTSRITIKSPNKGSKSPLQERLRSPQNP) are disordered. Residues 209-230 (ASVTYTTSRITIKSPNKGSKSP) show a composition bias toward polar residues. The residue at position 254 (Ser254) is a Phosphoserine. Disordered stretches follow at residues 345–391 (EDLV…TPLS) and 418–486 (PVLT…RPHA). Residues 366–375 (LPPPPAPPTF) show a composition bias toward pro residues. Polar residues-rich tracts occupy residues 382–391 (GNIKNSTPLS) and 420–478 (LTSS…QGSL). A PH domain is found at 634–741 (DNVKDGSLLL…WLSAFSDYID (108 aa)). Disordered regions lie at residues 746–777 (LSLSSSRNANDTDSASHLSAGTHHSKFGNATI) and 796–838 (NNNI…DSRR). Positions 752 to 764 (RNANDTDSASHLS) are enriched in polar residues. The span at 796 to 815 (NNNISNSSNNIANSDGIDSN) shows a compositional bias: low complexity. Positions 816–829 (PSSHSNFLASSSGN) are enriched in polar residues. The Rho-GAP domain maps to 913–1128 (LRLSSHKYQN…EKVDIHIPQV (216 aa)).

Its subcellular location is the cytoplasm. GTPase-activating protein (GAP) for CDC42 and less efficiently for RHO1. Negative regulator of the pheromone-response pathway through the STE20 protein kinase. This is GTPase-activating protein BEM3 (BEM3) from Saccharomyces cerevisiae (strain ATCC 204508 / S288c) (Baker's yeast).